A 370-amino-acid polypeptide reads, in one-letter code: Phosphate acyltransferase (370 aa).

Residues 349–370 (SAGRAGQDAPDEMAAPGRSEKR) are disordered.

This sequence belongs to the PlsX family. As to quaternary structure, homodimer. Probably interacts with PlsY.

It is found in the cytoplasm. The catalysed reaction is a fatty acyl-[ACP] + phosphate = an acyl phosphate + holo-[ACP]. It participates in lipid metabolism; phospholipid metabolism. Its function is as follows. Catalyzes the reversible formation of acyl-phosphate (acyl-PO(4)) from acyl-[acyl-carrier-protein] (acyl-ACP). This enzyme utilizes acyl-ACP as fatty acyl donor, but not acyl-CoA. In Cereibacter sphaeroides (strain ATCC 17029 / ATH 2.4.9) (Rhodobacter sphaeroides), this protein is Phosphate acyltransferase.